The primary structure comprises 651 residues: Acetyl-coenzyme A synthetase (651 aa).

CoA contacts are provided by residues 189 to 192 (RGGK), Thr311, and Asn335. ATP-binding positions include 387–389 (GEP), 411–416 (DTWWQT), Asp500, and Arg515. Ser523 provides a ligand contact to CoA. Residue Arg526 participates in ATP binding. Mg(2+) is bound by residues Val537, His539, and Val542. Arg584 contributes to the CoA binding site. Lys609 carries the N6-acetyllysine modification.

It belongs to the ATP-dependent AMP-binding enzyme family. Requires Mg(2+) as cofactor. Post-translationally, acetylated. Deacetylation by the SIR2-homolog deacetylase activates the enzyme.

It catalyses the reaction acetate + ATP + CoA = acetyl-CoA + AMP + diphosphate. Catalyzes the conversion of acetate into acetyl-CoA (AcCoA), an essential intermediate at the junction of anabolic and catabolic pathways. AcsA undergoes a two-step reaction. In the first half reaction, AcsA combines acetate with ATP to form acetyl-adenylate (AcAMP) intermediate. In the second half reaction, it can then transfer the acetyl group from AcAMP to the sulfhydryl group of CoA, forming the product AcCoA. The polypeptide is Acetyl-coenzyme A synthetase (Allorhizobium ampelinum (strain ATCC BAA-846 / DSM 112012 / S4) (Agrobacterium vitis (strain S4))).